Reading from the N-terminus, the 611-residue chain is Chaperone protein HtpG (611 aa).

Residues 1–326 (MSETLERHAF…TEDLPLNVSR (326 aa)) are a; substrate-binding. The b stretch occupies residues 327 to 536 (EMLQATPVLA…SGGPDLQMQR (210 aa)). The segment at 537 to 611 (LLRRAGRGFG…RVATALAAQG (75 aa)) is c.

Belongs to the heat shock protein 90 family. As to quaternary structure, homodimer.

The protein resides in the cytoplasm. Its function is as follows. Molecular chaperone. Has ATPase activity. The chain is Chaperone protein HtpG from Methylobacterium nodulans (strain LMG 21967 / CNCM I-2342 / ORS 2060).